A 426-amino-acid polypeptide reads, in one-letter code: tRNA(Met) cytidine acetate ligase (426 aa).

Residues V7 to H20, G101, N168, and R193 contribute to the ATP site.

The protein belongs to the TmcAL family.

It is found in the cytoplasm. The enzyme catalyses cytidine(34) in elongator tRNA(Met) + acetate + ATP = N(4)-acetylcytidine(34) in elongator tRNA(Met) + AMP + diphosphate. Catalyzes the formation of N(4)-acetylcytidine (ac(4)C) at the wobble position of elongator tRNA(Met), using acetate and ATP as substrates. First activates an acetate ion to form acetyladenylate (Ac-AMP) and then transfers the acetyl group to tRNA to form ac(4)C34. This is tRNA(Met) cytidine acetate ligase from Kosmotoga olearia (strain ATCC BAA-1733 / DSM 21960 / TBF 19.5.1).